Reading from the N-terminus, the 568-residue chain is Adenine deaminase (568 aa).

This sequence belongs to the metallo-dependent hydrolases superfamily. Adenine deaminase family. The cofactor is Mn(2+).

It catalyses the reaction adenine + H2O + H(+) = hypoxanthine + NH4(+). The polypeptide is Adenine deaminase (Clostridium perfringens (strain ATCC 13124 / DSM 756 / JCM 1290 / NCIMB 6125 / NCTC 8237 / Type A)).